Here is a 66-residue protein sequence, read N- to C-terminus: Large ribosomal subunit protein uL29 (66 aa).

This sequence belongs to the universal ribosomal protein uL29 family.

This chain is Large ribosomal subunit protein uL29, found in Thermosipho africanus (strain TCF52B).